The following is a 399-amino-acid chain: 1-deoxy-D-xylulose 5-phosphate reductoisomerase (399 aa).

Residues Thr11, Gly12, Ser13, Ile14, Gly37, Asn39, and Asn125 each coordinate NADPH. A 1-deoxy-D-xylulose 5-phosphate-binding site is contributed by Lys126. Glu127 provides a ligand contact to NADPH. Asp151 is a Mn(2+) binding site. Residues Ser152, Glu153, Ser177, and His200 each contribute to the 1-deoxy-D-xylulose 5-phosphate site. Glu153 is a Mn(2+) binding site. Gly206 lines the NADPH pocket. Ser213, Asn218, Lys219, and Glu222 together coordinate 1-deoxy-D-xylulose 5-phosphate. Glu222 contributes to the Mn(2+) binding site.

The protein belongs to the DXR family. Mg(2+) serves as cofactor. The cofactor is Mn(2+).

It carries out the reaction 2-C-methyl-D-erythritol 4-phosphate + NADP(+) = 1-deoxy-D-xylulose 5-phosphate + NADPH + H(+). It participates in isoprenoid biosynthesis; isopentenyl diphosphate biosynthesis via DXP pathway; isopentenyl diphosphate from 1-deoxy-D-xylulose 5-phosphate: step 1/6. In terms of biological role, catalyzes the NADPH-dependent rearrangement and reduction of 1-deoxy-D-xylulose-5-phosphate (DXP) to 2-C-methyl-D-erythritol 4-phosphate (MEP). The polypeptide is 1-deoxy-D-xylulose 5-phosphate reductoisomerase (Nostoc sp. (strain PCC 7120 / SAG 25.82 / UTEX 2576)).